The primary structure comprises 161 residues: MTSSSAPSRKALSKIACNRLQKELSEWQLNPPTGFRHKVTDNLQKWTIDVTGAPGTLYANETYQLQVEFPEHYPMEAPQVVFVSPAPSHPHIYSNGHICLDILYDSWSPAMTVNSVCISILSMLSSSPAKQRPADNDRYVKNCKNGRSPKETRWWFHDDKV.

Residues 15 to 161 (IACNRLQKEL…TRWWFHDDKV (147 aa)) form the UBC core domain. Residue cysteine 99 is the Glycyl thioester intermediate of the active site.

This sequence belongs to the ubiquitin-conjugating enzyme family.

The enzyme catalyses S-ubiquitinyl-[E1 ubiquitin-activating enzyme]-L-cysteine + [E2 ubiquitin-conjugating enzyme]-L-cysteine = [E1 ubiquitin-activating enzyme]-L-cysteine + S-ubiquitinyl-[E2 ubiquitin-conjugating enzyme]-L-cysteine.. It functions in the pathway protein modification; protein ubiquitination. Functionally, accepts the ubiquitin from the E1 complex and catalyzes its covalent attachment to other proteins. The sequence is that of Ubiquitin-conjugating enzyme 15 (UBC15) from Arabidopsis thaliana (Mouse-ear cress).